Here is a 311-residue protein sequence, read N- to C-terminus: Cytochrome f (311 aa).

The signal sequence occupies residues 1-27 (MRRHLSLLIGSLVLGLSLLIAPAASWA). 4 residues coordinate heme: Tyr28, Cys48, Cys51, and His52. Residues 277-297 (IYGLLAFFAAVALAQIMLVLK) form a helical membrane-spanning segment.

The protein belongs to the cytochrome f family. In terms of assembly, the 4 large subunits of the cytochrome b6-f complex are cytochrome b6, subunit IV (17 kDa polypeptide, PetD), cytochrome f and the Rieske protein, while the 4 small subunits are PetG, PetL, PetM and PetN. The complex functions as a dimer. Heme is required as a cofactor.

The protein localises to the cellular thylakoid membrane. Its function is as follows. Component of the cytochrome b6-f complex, which mediates electron transfer between photosystem II (PSII) and photosystem I (PSI), cyclic electron flow around PSI, and state transitions. This Parasynechococcus marenigrum (strain WH8102) protein is Cytochrome f.